We begin with the raw amino-acid sequence, 251 residues long: Probable transcriptional regulatory protein Mflv_3828 (251 aa).

The protein belongs to the TACO1 family.

The protein resides in the cytoplasm. This is Probable transcriptional regulatory protein Mflv_3828 from Mycolicibacterium gilvum (strain PYR-GCK) (Mycobacterium gilvum (strain PYR-GCK)).